We begin with the raw amino-acid sequence, 429 residues long: Serine--tRNA ligase (429 aa).

An L-serine-binding site is contributed by 228 to 230 (TSE). ATP is bound at residue 259–261 (RAE). Glu-282 is a binding site for L-serine. Position 346–349 (346–349 (EISS)) interacts with ATP. Ser-384 is a binding site for L-serine.

The protein belongs to the class-II aminoacyl-tRNA synthetase family. Type-1 seryl-tRNA synthetase subfamily. Homodimer. The tRNA molecule binds across the dimer.

It localises to the cytoplasm. The catalysed reaction is tRNA(Ser) + L-serine + ATP = L-seryl-tRNA(Ser) + AMP + diphosphate + H(+). It carries out the reaction tRNA(Sec) + L-serine + ATP = L-seryl-tRNA(Sec) + AMP + diphosphate + H(+). It functions in the pathway aminoacyl-tRNA biosynthesis; selenocysteinyl-tRNA(Sec) biosynthesis; L-seryl-tRNA(Sec) from L-serine and tRNA(Sec): step 1/1. Functionally, catalyzes the attachment of serine to tRNA(Ser). Is also able to aminoacylate tRNA(Sec) with serine, to form the misacylated tRNA L-seryl-tRNA(Sec), which will be further converted into selenocysteinyl-tRNA(Sec). In Anaplasma marginale (strain St. Maries), this protein is Serine--tRNA ligase.